The chain runs to 407 residues: Serine hydroxymethyltransferase (407 aa).

(6S)-5,6,7,8-tetrahydrofolate contacts are provided by residues L120 and 124 to 126; that span reads GHL. K229 bears the N6-(pyridoxal phosphate)lysine mark.

The protein belongs to the SHMT family. As to quaternary structure, homodimer. Pyridoxal 5'-phosphate serves as cofactor.

The protein resides in the cytoplasm. It carries out the reaction (6R)-5,10-methylene-5,6,7,8-tetrahydrofolate + glycine + H2O = (6S)-5,6,7,8-tetrahydrofolate + L-serine. It participates in one-carbon metabolism; tetrahydrofolate interconversion. It functions in the pathway amino-acid biosynthesis; glycine biosynthesis; glycine from L-serine: step 1/1. In terms of biological role, catalyzes the reversible interconversion of serine and glycine with tetrahydrofolate (THF) serving as the one-carbon carrier. This reaction serves as the major source of one-carbon groups required for the biosynthesis of purines, thymidylate, methionine, and other important biomolecules. Also exhibits THF-independent aldolase activity toward beta-hydroxyamino acids, producing glycine and aldehydes, via a retro-aldol mechanism. This Deinococcus deserti (strain DSM 17065 / CIP 109153 / LMG 22923 / VCD115) protein is Serine hydroxymethyltransferase.